We begin with the raw amino-acid sequence, 462 residues long: Asparagine--tRNA ligase (462 aa).

The protein belongs to the class-II aminoacyl-tRNA synthetase family. Homodimer.

The protein localises to the cytoplasm. The enzyme catalyses tRNA(Asn) + L-asparagine + ATP = L-asparaginyl-tRNA(Asn) + AMP + diphosphate + H(+). This chain is Asparagine--tRNA ligase, found in Borreliella burgdorferi (strain ATCC 35210 / DSM 4680 / CIP 102532 / B31) (Borrelia burgdorferi).